The chain runs to 45 residues: uncharacterized protein (45 aa).

This is an uncharacterized protein from Treponema pallidum (strain Nichols).